Here is an 876-residue protein sequence, read N- to C-terminus: Alanine--tRNA ligase (876 aa).

Residues histidine 564, histidine 568, cysteine 666, and histidine 670 each coordinate Zn(2+).

This sequence belongs to the class-II aminoacyl-tRNA synthetase family. Homotetramer. It depends on Zn(2+) as a cofactor.

The protein localises to the cytoplasm. The catalysed reaction is tRNA(Ala) + L-alanine + ATP = L-alanyl-tRNA(Ala) + AMP + diphosphate. In terms of biological role, catalyzes the attachment of alanine to tRNA(Ala) in a two-step reaction: alanine is first activated by ATP to form Ala-AMP and then transferred to the acceptor end of tRNA(Ala). Also edits incorrectly charged Ser-tRNA(Ala) and Gly-tRNA(Ala) via its editing domain. The protein is Alanine--tRNA ligase of Salmonella choleraesuis (strain SC-B67).